A 573-amino-acid polypeptide reads, in one-letter code: DNA ligase (573 aa).

An ATP-binding site is contributed by E250. K252 (N6-AMP-lysine intermediate) is an active-site residue. Residues R257, R272, E301, F342, R432, and K438 each contribute to the ATP site.

It belongs to the ATP-dependent DNA ligase family. Requires Mg(2+) as cofactor.

The enzyme catalyses ATP + (deoxyribonucleotide)n-3'-hydroxyl + 5'-phospho-(deoxyribonucleotide)m = (deoxyribonucleotide)n+m + AMP + diphosphate.. In terms of biological role, DNA ligase that seals nicks in double-stranded DNA during DNA replication, DNA recombination and DNA repair. The chain is DNA ligase from Methanococcus maripaludis (strain C5 / ATCC BAA-1333).